A 361-amino-acid polypeptide reads, in one-letter code: Fructose-1,6-bisphosphatase class 1 2 (361 aa).

Mg(2+) is bound by residues glutamate 110, aspartate 134, leucine 136, and aspartate 137. Substrate contacts are provided by residues 137–140, asparagine 231, tyrosine 264, and lysine 294; that span reads DGSS. Residue glutamate 300 participates in Mg(2+) binding.

Belongs to the FBPase class 1 family. Homotetramer. Requires Mg(2+) as cofactor.

The protein localises to the cytoplasm. It catalyses the reaction beta-D-fructose 1,6-bisphosphate + H2O = beta-D-fructose 6-phosphate + phosphate. Its pathway is carbohydrate biosynthesis; gluconeogenesis. The chain is Fructose-1,6-bisphosphatase class 1 2 from Salinibacter ruber (strain DSM 13855 / M31).